The following is a 159-amino-acid chain: MTIAVCPGSFDPVTNGHIDVITRCCRLFDEVHVVVAVNAMKKPLFTETERVDIIKHALADSGMTNYVVAWTDGLITDYCRKVDSPVIVKGLRQNGDYEAELGMALVNRHLAYVETMFLPANPVLEHISSSVVKDVARHGGDITGMVPDYVVPLLEKALR.

Ser9 provides a ligand contact to substrate. Residues 9 to 10 and His17 each bind ATP; that span reads SF. Residues Lys41, Ile75, and Lys89 each contribute to the substrate site. ATP is bound by residues 90–92, Glu100, and 124–130; these read GLR and LEHISSS.

This sequence belongs to the bacterial CoaD family. As to quaternary structure, homohexamer. Mg(2+) serves as cofactor.

Its subcellular location is the cytoplasm. It catalyses the reaction (R)-4'-phosphopantetheine + ATP + H(+) = 3'-dephospho-CoA + diphosphate. It participates in cofactor biosynthesis; coenzyme A biosynthesis; CoA from (R)-pantothenate: step 4/5. Its function is as follows. Reversibly transfers an adenylyl group from ATP to 4'-phosphopantetheine, yielding dephospho-CoA (dPCoA) and pyrophosphate. In Bifidobacterium animalis subsp. lactis (strain AD011), this protein is Phosphopantetheine adenylyltransferase.